The following is a 351-amino-acid chain: Putative F-box protein At5g52610 (351 aa).

One can recognise an F-box domain in the interval 1-41; that stretch reads MISEDLLVEILLRLPVKPLARCLCVCKLWATIIRSRYFINL.

The polypeptide is Putative F-box protein At5g52610 (Arabidopsis thaliana (Mouse-ear cress)).